Reading from the N-terminus, the 122-residue chain is Small ribosomal subunit protein bS6 (122 aa).

Positions 97 to 122 (TAPSPMMKAVQKEDAAKSHRAEAPAA) are disordered. The segment covering 106 to 122 (VQKEDAAKSHRAEAPAA) has biased composition (basic and acidic residues).

This sequence belongs to the bacterial ribosomal protein bS6 family.

In terms of biological role, binds together with bS18 to 16S ribosomal RNA. The sequence is that of Small ribosomal subunit protein bS6 from Janthinobacterium sp. (strain Marseille) (Minibacterium massiliensis).